Here is a 90-residue protein sequence, read N- to C-terminus: UPF0298 protein SSU05_1549 (90 aa).

This sequence belongs to the UPF0298 family.

The protein localises to the cytoplasm. The protein is UPF0298 protein SSU05_1549 of Streptococcus suis (strain 05ZYH33).